A 249-amino-acid polypeptide reads, in one-letter code: Tumor necrosis factor receptor superfamily member 13B (249 aa).

The Extracellular portion of the chain corresponds to 1-128 (MAMAFCPKDQ…LSSDQLTLYC (128 aa)). TNFR-Cys repeat units follow at residues 5–38 (FCPKDQYWDSSRKSCVSCALTCSQRSQRTCTDFC) and 42–76 (NCRKEQGRYYDHLLGACVSCDSTCTQHPQQCAHFC). 6 disulfide bridges follow: Cys6–Cys19, Cys22–Cys34, Cys26–Cys38, Cys43–Cys58, Cys61–Cys72, and Cys65–Cys76. The interval 86–116 (LQPELGRPQAGEVEVRSDNSGRHQGSEHGPG) is disordered. The span at 98 to 111 (VEVRSDNSGRHQGS) shows a compositional bias: basic and acidic residues. Residues 129–149 (TLGVCLCAIFCCFLVALASFL) form a helical; Signal-anchor for type III membrane protein membrane-spanning segment. The Cytoplasmic portion of the chain corresponds to 150–249 (RRRGEPLPSQ…ASTGDARPAT (100 aa)). The segment at 156-176 (LPSQPAGPRGSQANSPHAHRP) is disordered.

In terms of assembly, binds TRAF2, TRAF5 and TRAF6. Binds the NH2-terminal domain of CAMLG with its C-terminus.

The protein localises to the membrane. In terms of biological role, receptor for TNFSF13/APRIL and TNFSF13B/TALL1/BAFF/BLYS that binds both ligands with similar high affinity. Mediates calcineurin-dependent activation of NF-AT, as well as activation of NF-kappa-B and AP-1. Involved in the stimulation of B- and T-cell function and the regulation of humoral immunity. In Mus musculus (Mouse), this protein is Tumor necrosis factor receptor superfamily member 13B (Tnfrsf13b).